The following is a 106-amino-acid chain: uncharacterized protein (106 aa).

2 helical membrane-spanning segments follow: residues 43-63 and 86-106; these read CSTI…LAIV and IPEL…FSLF.

The protein localises to the membrane. This is an uncharacterized protein from Saccharomyces cerevisiae (strain ATCC 204508 / S288c) (Baker's yeast).